We begin with the raw amino-acid sequence, 192 residues long: UPF0301 protein Bcep18194_A3962 (192 aa).

The protein belongs to the UPF0301 (AlgH) family.

This is UPF0301 protein Bcep18194_A3962 from Burkholderia lata (strain ATCC 17760 / DSM 23089 / LMG 22485 / NCIMB 9086 / R18194 / 383).